The sequence spans 365 residues: Peptide chain release factor 2 (365 aa).

The residue at position 251 (Q251) is an N5-methylglutamine.

The protein belongs to the prokaryotic/mitochondrial release factor family. Methylated by PrmC. Methylation increases the termination efficiency of RF2.

It localises to the cytoplasm. Its function is as follows. Peptide chain release factor 2 directs the termination of translation in response to the peptide chain termination codons UGA and UAA. In Aliarcobacter butzleri (strain RM4018) (Arcobacter butzleri), this protein is Peptide chain release factor 2.